Reading from the N-terminus, the 392-residue chain is O-phospho-L-seryl-tRNA:Cys-tRNA synthase (392 aa).

Residues 84–85 (AR), asparagine 191, and 214–216 (SGH) contribute to the pyridoxal 5'-phosphate site. Lysine 217 is modified (N6-(pyridoxal phosphate)lysine).

Belongs to the SepCysS family. As to quaternary structure, homodimer. Interacts with SepRS. Requires pyridoxal 5'-phosphate as cofactor.

The catalysed reaction is O-phospho-L-seryl-tRNA(Cys) + hydrogen sulfide + H(+) = L-cysteinyl-tRNA(Cys) + phosphate. Functionally, converts O-phospho-L-seryl-tRNA(Cys) (Sep-tRNA(Cys)) to L-cysteinyl-tRNA(Cys) (Cys-tRNA(Cys)). The chain is O-phospho-L-seryl-tRNA:Cys-tRNA synthase from Methanopyrus kandleri (strain AV19 / DSM 6324 / JCM 9639 / NBRC 100938).